A 356-amino-acid chain; its full sequence is Tyrosine recombinase XerS (356 aa).

The Core-binding (CB) domain maps to 16–121; it reads IMPWYVLDYY…ALSSLYKYLT (106 aa). One can recognise a Tyr recombinase domain in the interval 169–354; the sequence is AFLDYVDKEY…VNDEQKNALD (186 aa). Catalysis depends on residues arginine 210, lysine 234, histidine 306, arginine 309, and histidine 332. Tyrosine 341 (O-(3'-phospho-DNA)-tyrosine intermediate) is an active-site residue.

Belongs to the 'phage' integrase family. XerS subfamily.

The protein resides in the cytoplasm. Its activity is regulated as follows. FtsK is required for recombination. Functionally, site-specific tyrosine recombinase, which acts by catalyzing the cutting and rejoining of the recombining DNA molecules. Essential to convert dimers of the bacterial chromosome into monomers to permit their segregation at cell division. This chain is Tyrosine recombinase XerS, found in Streptococcus pyogenes serotype M5 (strain Manfredo).